The primary structure comprises 328 residues: Probable cell division protein WhiA (328 aa).

The H-T-H motif DNA-binding region spans 273-306 (SLEELGALADPPLTKDAVAGRIRRLLAMADKRAS).

Belongs to the WhiA family. As to quaternary structure, monomer in solution.

In terms of biological role, involved in cell division and chromosome segregation. Involved in sporulation. May coordinate the cessation of aerial hyphae growth and subsequent chromosome segregation and/or septation. Required for expression of the ParB partioning protein during sporogenesis. Activates its own transcription and represses WhiB. Binds with low affinity to its own promoter and to the Parp2 sporulation-specific promoter. Also binds directly to the RNA polymerase sigma factor WhiG, leading to inhibition of WhiG-dependent transcription in a dose-dependent manner. The sequence is that of Probable cell division protein WhiA from Streptomyces coelicolor (strain ATCC BAA-471 / A3(2) / M145).